Consider the following 143-residue polypeptide: Large ribosomal subunit protein uL11 (143 aa).

This sequence belongs to the universal ribosomal protein uL11 family. Part of the ribosomal stalk of the 50S ribosomal subunit. Interacts with L10 and the large rRNA to form the base of the stalk. L10 forms an elongated spine to which L12 dimers bind in a sequential fashion forming a multimeric L10(L12)X complex. One or more lysine residues are methylated.

Functionally, forms part of the ribosomal stalk which helps the ribosome interact with GTP-bound translation factors. The sequence is that of Large ribosomal subunit protein uL11 from Methylibium petroleiphilum (strain ATCC BAA-1232 / LMG 22953 / PM1).